The chain runs to 272 residues: 3-methyl-2-oxobutanoate hydroxymethyltransferase (272 aa).

Asp51 and Asp90 together coordinate Mg(2+). 3-methyl-2-oxobutanoate is bound by residues 51–52, Asp90, and Lys120; that span reads DS. Glu122 is a binding site for Mg(2+). The Proton acceptor role is filled by Glu189.

Belongs to the PanB family. In terms of assembly, homodecamer; pentamer of dimers. It depends on Mg(2+) as a cofactor.

The protein resides in the cytoplasm. The catalysed reaction is 3-methyl-2-oxobutanoate + (6R)-5,10-methylene-5,6,7,8-tetrahydrofolate + H2O = 2-dehydropantoate + (6S)-5,6,7,8-tetrahydrofolate. The protein operates within cofactor biosynthesis; (R)-pantothenate biosynthesis; (R)-pantoate from 3-methyl-2-oxobutanoate: step 1/2. Functionally, catalyzes the reversible reaction in which hydroxymethyl group from 5,10-methylenetetrahydrofolate is transferred onto alpha-ketoisovalerate to form ketopantoate. This is 3-methyl-2-oxobutanoate hydroxymethyltransferase from Syntrophus aciditrophicus (strain SB).